Reading from the N-terminus, the 402-residue chain is Elongation factor Tu (402 aa).

Positions 16 to 211 (KEHINIGTIG…AVDSYIDSPV (196 aa)) constitute a tr-type G domain. The segment at 25-32 (GHVDHGKT) is G1. Residue 25 to 32 (GHVDHGKT) participates in GTP binding. Position 32 (T32) interacts with Mg(2+). The interval 66-70 (GITIN) is G2. The G3 stretch occupies residues 87–90 (DCPG). Residues 87 to 91 (DCPGH) and 142 to 145 (NKID) contribute to the GTP site. Residues 142–145 (NKID) form a G4 region. Positions 181–183 (SAR) are G5.

The protein belongs to the TRAFAC class translation factor GTPase superfamily. Classic translation factor GTPase family. EF-Tu/EF-1A subfamily. As to quaternary structure, monomer.

It localises to the cytoplasm. It carries out the reaction GTP + H2O = GDP + phosphate + H(+). In terms of biological role, GTP hydrolase that promotes the GTP-dependent binding of aminoacyl-tRNA to the A-site of ribosomes during protein biosynthesis. In Mesomycoplasma hyopneumoniae (strain J / ATCC 25934 / NCTC 10110) (Mycoplasma hyopneumoniae), this protein is Elongation factor Tu.